A 419-amino-acid polypeptide reads, in one-letter code: Dynein regulatory complex protein 9 (419 aa).

Disordered stretches follow at residues 25 to 45 and 394 to 419; these read TGEPPEAAEEDLDYEEEEETS and NFKMPKKDKDDSKDSKGKEKEKRRKK. A compositionally biased stretch (acidic residues) spans 30–45; it reads EAAEEDLDYEEEEETS. The IQ domain occupies 372–401; that stretch reads ELRSIVKLQAWWRGSVVRKEIGNFKMPKKD. Basic and acidic residues predominate over residues 394 to 413; it reads NFKMPKKDKDDSKDSKGKEK.

Belongs to the DRC9 family. In terms of assembly, component of the nexin-dynein regulatory complex (N-DRC). Interacts (via IQ domain) with CALM when calcium levels are low. Does not interact with CALM in the presence of Ca(2+). Interacts with the HSP70 proteins HSPA1L and HSPA8. May form a complex with CAMK4 and HSP70. Expressed in the testes (at protein level). Also detected in oviduct (at protein level). Also detected in the trachea.

Its subcellular location is the cytoplasm. It localises to the cell projection. It is found in the cilium. The protein localises to the flagellum. The protein resides in the cytoskeleton. Its subcellular location is the flagellum axoneme. Its function is as follows. Component of the nexin-dynein regulatory complex (N-DRC), a key regulator of ciliary/flagellar motility which maintains the alignment and integrity of the distal axoneme and regulates microtubule sliding in motile axonemes. Binds calmodulin when cellular Ca(2+) levels are low and thereby contributes to the regulation of calcium and calmodulin-dependent protein kinase IV (CAMK4) activity; contributes to the regulation of CAMK4 signaling cascades. Required for normal axoneme assembly in sperm flagella, normal sperm tail formation and for male fertility. The protein is Dynein regulatory complex protein 9 (Iqcg) of Mus musculus (Mouse).